A 251-amino-acid polypeptide reads, in one-letter code: MLAKRIIPCLDIKDGQTVKGTNFVNLRQAGDPVELGRAYSEQGADELVFLDITASHEGRKTFTELVKRIAANINIPFTVGGGINELSDVDRLLNAGADKISINSSAIRNPQLIDDIAKNFGSQVCVLAVDAKQTENGWKCYLNGGRIETDKELLAWTKEAQERGAGEILFTSMNHDGVKTGYANEALASLADQLSIPVIASGGAGLKEHFRDAFLVGKADAALAASVFHFGEIKIPELKSYLCGEGITIRG.

Active-site residues include Asp11 and Asp130.

Belongs to the HisA/HisF family. As to quaternary structure, heterodimer of HisH and HisF.

The protein localises to the cytoplasm. It carries out the reaction 5-[(5-phospho-1-deoxy-D-ribulos-1-ylimino)methylamino]-1-(5-phospho-beta-D-ribosyl)imidazole-4-carboxamide + L-glutamine = D-erythro-1-(imidazol-4-yl)glycerol 3-phosphate + 5-amino-1-(5-phospho-beta-D-ribosyl)imidazole-4-carboxamide + L-glutamate + H(+). It participates in amino-acid biosynthesis; L-histidine biosynthesis; L-histidine from 5-phospho-alpha-D-ribose 1-diphosphate: step 5/9. In terms of biological role, IGPS catalyzes the conversion of PRFAR and glutamine to IGP, AICAR and glutamate. The HisF subunit catalyzes the cyclization activity that produces IGP and AICAR from PRFAR using the ammonia provided by the HisH subunit. The protein is Imidazole glycerol phosphate synthase subunit HisF of Bacteroides thetaiotaomicron (strain ATCC 29148 / DSM 2079 / JCM 5827 / CCUG 10774 / NCTC 10582 / VPI-5482 / E50).